A 249-amino-acid chain; its full sequence is MILGYVNNTYFNQAPNFSSNFNFQFQKRLTKEDIYFIVPDYLIPDDCLQIHKLYDNCMSGNFVVMQNKPIQYNSDIEIIEHYTDELAEVALSRFSLIMQAKFSKIFKSEINDESINQLVSEIYNGAPFVKMSPMFNADDDIIDLTSNSVIPALTEMKREYQNKISELSNYLGINSLAVDKESGVSDEEAKSNRGFTTSNSNIYLKGREPITFLSKRYGLDIKPYYDDETTSKISMVDTLFKDESSDING.

This sequence belongs to the phi29likevirus portal protein family. Homododecamer. Interacts with the pRNA.

It is found in the virion. In terms of biological role, forms the portal vertex of the capsid. This portal plays critical roles in head assembly, genome packaging, neck/tail attachment, and genome ejection. The portal protein multimerizes as a single ring-shaped homododecamer arranged around a central channel. Binds to the 6 packaging RNA molecules (pRNA) forming a double-ring structure which in turn binds to the ATPase gp16 hexamer, forming the active DNA-translocating motor. This complex is essential for the specificity of packaging from the left DNA end. The sequence is that of Portal protein from Staphylococcus phage 44AHJD.